Reading from the N-terminus, the 303-residue chain is tRNA pseudouridine synthase B (303 aa).

Aspartate 47 acts as the Nucleophile in catalysis.

This sequence belongs to the pseudouridine synthase TruB family. Type 1 subfamily.

The enzyme catalyses uridine(55) in tRNA = pseudouridine(55) in tRNA. Responsible for synthesis of pseudouridine from uracil-55 in the psi GC loop of transfer RNAs. This chain is tRNA pseudouridine synthase B, found in Legionella pneumophila (strain Lens).